Reading from the N-terminus, the 125-residue chain is Glycine cleavage system H protein (125 aa).

One can recognise a Lipoyl-binding domain in the interval 22–104 (VATVGITIHA…EGEGWLFKLK (83 aa)). N6-lipoyllysine is present on Lys63.

Belongs to the GcvH family. In terms of assembly, the glycine cleavage system is composed of four proteins: P, T, L and H. (R)-lipoate is required as a cofactor.

Its function is as follows. The glycine cleavage system catalyzes the degradation of glycine. The H protein shuttles the methylamine group of glycine from the P protein to the T protein. This Brucella abortus (strain 2308) protein is Glycine cleavage system H protein.